The sequence spans 409 residues: SPI-1 type 3 secretion system translocon protein SctB (409 aa).

The helical transmembrane segment at 119–140 (ISGMSSSAVALLAAANTLMLTL) threads the bilayer. Positions 350–368 (ERSEQQISQVNNRVASTAS) are enriched in polar residues. The tract at residues 350–378 (ERSEQQISQVNNRVASTASDEARESSRKS) is disordered.

Belongs to the SctB/SipC family. The core secretion machinery of the T3SS is composed of approximately 20 different proteins, including cytoplasmic components, a base, an export apparatus and a needle. This subunit is involved in the formation of a pore, called the translocon, in host membrane.

It localises to the secreted. The protein resides in the host membrane. Component of the type III secretion system 1 (SPI-1 T3SS), also called injectisome, which is used to inject bacterial effector proteins into eukaryotic host cells. SipB/SctE1 and SipC/SctB1 are inserted into the host membrane where they form a pore and allow the translocation of effector proteins into the cytosol of target cells. This chain is SPI-1 type 3 secretion system translocon protein SctB, found in Salmonella typhi.